Reading from the N-terminus, the 347-residue chain is Sensor protein VraS (347 aa).

2 helical membrane-spanning segments follow: residues 13-33 and 43-63; these read ILVYSMLAAFLFIDKVFVNII and IFGIPVFLFLNLIIILLCIIV. The region spanning 150 to 341 is the Histidine kinase domain; sequence RLARELHDSV…RIEVKAPLNK (192 aa). Histidine 156 is modified (phosphohistidine).

Post-translationally, autophosphorylated on His-156.

It is found in the cell membrane. The catalysed reaction is ATP + protein L-histidine = ADP + protein N-phospho-L-histidine.. Member of the two-component regulatory system PprA/PprB involved in biofilm formation by controlling the expression of many related genes including type IVb pili major subunit flp pilin, adhesin bapA or cupE fimbriae. Also modulates quorum-sensing signal production acting on both negative and positive modulators. Functions as a heme sensor histidine kinase which is autophosphorylated at a histidine residue and transfers its phosphate group to PprB. The protein is Sensor protein VraS (vraS) of Staphylococcus aureus (strain Mu3 / ATCC 700698).